The chain runs to 326 residues: ATP-dependent 6-phosphofructokinase (326 aa).

G12 is an ATP binding site. 22 to 26 (RAIIK) contacts ADP. ATP-binding positions include 73–74 (RF) and 103–106 (GDGS). D104 serves as a coordination point for Mg(2+). 126 to 128 (TID) lines the substrate pocket. D128 acts as the Proton acceptor in catalysis. Residue R155 coordinates ADP. Substrate contacts are provided by residues R163 and 170 to 172 (MGH). ADP is bound by residues 186–188 (GSE), K212, and 215–217 (KRS). Residues E224, K246, and 252–255 (HIQR) each bind substrate.

It belongs to the phosphofructokinase type A (PFKA) family. ATP-dependent PFK group I subfamily. Prokaryotic clade 'B1' sub-subfamily. As to quaternary structure, homotetramer. The cofactor is Mg(2+).

It is found in the cytoplasm. The catalysed reaction is beta-D-fructose 6-phosphate + ATP = beta-D-fructose 1,6-bisphosphate + ADP + H(+). It participates in carbohydrate degradation; glycolysis; D-glyceraldehyde 3-phosphate and glycerone phosphate from D-glucose: step 3/4. Its activity is regulated as follows. Allosterically activated by ADP and other diphosphonucleosides, and allosterically inhibited by phosphoenolpyruvate. Catalyzes the phosphorylation of D-fructose 6-phosphate to fructose 1,6-bisphosphate by ATP, the first committing step of glycolysis. This Mycoplasmopsis pulmonis (strain UAB CTIP) (Mycoplasma pulmonis) protein is ATP-dependent 6-phosphofructokinase.